Here is a 463-residue protein sequence, read N- to C-terminus: Putative protein FAM90A2P (463 aa).

Disordered regions lie at residues 1–42 (MTAR…DPRL), 67–115 (ALVP…PQRK), 150–295 (MPVH…PAQA), and 326–365 (ALENLQPPPAATELGPSTSPQMGRRTPAQVPGVDRQPPHS). 3 stretches are compositionally biased toward basic and acidic residues: residues 74–83 (GKKEGKENLK), 97–114 (NKDKGEKEERPRQQDPQR), and 159–170 (PCVDPELADRSA). Residues 180–198 (LASLSPLRKASLRSSSSLG) show a composition bias toward low complexity.

Belongs to the FAM90 family.

This is Putative protein FAM90A2P (FAM90A2P) from Homo sapiens (Human).